Here is a 158-residue protein sequence, read N- to C-terminus: Lysozyme C (158 aa).

A signal peptide spans 1–18 (MRVLPLALLVGLLAVSDA). In terms of domain architecture, C-type lysozyme spans 19 to 150 (KVLGKCEFAR…DQYMAECWSR (132 aa)). Cystine bridges form between Cys-24/Cys-147, Cys-46/Cys-135, Cys-80/Cys-93, and Cys-89/Cys-107. Catalysis depends on residues Glu-51 and Asp-68.

The protein belongs to the glycosyl hydrolase 22 family. In terms of assembly, monomer. Strongly expressed in gill and gonad, and marginally detectable in hemolymph and lymphoid organ. Not expressed in kidney, hepatopancreas or tail muscle.

It localises to the secreted. It carries out the reaction Hydrolysis of (1-&gt;4)-beta-linkages between N-acetylmuramic acid and N-acetyl-D-glucosamine residues in a peptidoglycan and between N-acetyl-D-glucosamine residues in chitodextrins.. Its function is as follows. Lysozymes have primarily a bacteriolytic function; those in tissues and body fluids are associated with the monocyte-macrophage system and enhance the activity of immunoagents. Has bacteriolytic activity against Gram-positive bacterium M.luteus, and Gram-negative shrimp pathogenic bacteria V.alginolyticus, V.parahaemolyticus and V.vulnificus. May play a role in host defense. In Penaeus merguiensis (Banana prawn), this protein is Lysozyme C.